A 212-amino-acid chain; its full sequence is MPVHEIRHPLIRHKLGIMRRADLSTKSFRELSQEVGALLTYEASKDLPLAESTVEGWCGTVTVEKIAGKKVTVVPILRAGIGMLDGVLSLIPGAKVSVVGVARNEETLQAHTYLERLVGELDQRLALIVDPMLATGGSMLATIDMLKRAGCREIRALVLVAAPVGIKAVLDRHPDVHIYTASIDDGLNENGYIMPGLGDAGDRIFGTKQKAE.

Residues Arg-78, Arg-103, and 130-138 (DPMLATGGS) contribute to the 5-phospho-alpha-D-ribose 1-diphosphate site. Uracil is bound by residues Ile-193 and 198–200 (GDA). Asp-199 is a binding site for 5-phospho-alpha-D-ribose 1-diphosphate.

It belongs to the UPRTase family. Mg(2+) is required as a cofactor.

It catalyses the reaction UMP + diphosphate = 5-phospho-alpha-D-ribose 1-diphosphate + uracil. It functions in the pathway pyrimidine metabolism; UMP biosynthesis via salvage pathway; UMP from uracil: step 1/1. Allosterically activated by GTP. Functionally, catalyzes the conversion of uracil and 5-phospho-alpha-D-ribose 1-diphosphate (PRPP) to UMP and diphosphate. The protein is Uracil phosphoribosyltransferase of Bordetella petrii (strain ATCC BAA-461 / DSM 12804 / CCUG 43448).